Consider the following 233-residue polypeptide: Glycerol-3-phosphate acyltransferase 5 (233 aa).

A run of 5 helical transmembrane segments spans residues 3–23 (LVFI…MAYL), 69–89 (MILL…VGLF), 116–136 (LVMA…FGLF), 143–163 (VFLG…FFGI), and 168–188 (TISW…LMAP).

This sequence belongs to the PlsY family. Probably interacts with PlsX.

The protein localises to the cell membrane. The enzyme catalyses an acyl phosphate + sn-glycerol 3-phosphate = a 1-acyl-sn-glycero-3-phosphate + phosphate. It functions in the pathway lipid metabolism; phospholipid metabolism. Its function is as follows. Catalyzes the transfer of an acyl group from acyl-phosphate (acyl-PO(4)) to glycerol-3-phosphate (G3P) to form lysophosphatidic acid (LPA). This enzyme utilizes acyl-phosphate as fatty acyl donor, but not acyl-CoA or acyl-ACP. This is Glycerol-3-phosphate acyltransferase 5 from Dehalococcoides mccartyi (strain ATCC BAA-2266 / KCTC 15142 / 195) (Dehalococcoides ethenogenes (strain 195)).